We begin with the raw amino-acid sequence, 334 residues long: Holliday junction branch migration complex subunit RuvB (334 aa).

Positions Met1–Tyr182 are large ATPase domain (RuvB-L). Residues Leu21, Arg22, Gly63, Lys66, Thr67, Thr68, Glu129 to Phe131, Arg172, Tyr182, and Arg219 contribute to the ATP site. Residue Thr67 coordinates Mg(2+). The small ATPAse domain (RuvB-S) stretch occupies residues Asn183–Gln253. The tract at residues Gln256–Gly334 is head domain (RuvB-H). Arg292, Arg311, and Arg316 together coordinate DNA.

This sequence belongs to the RuvB family. Homohexamer. Forms an RuvA(8)-RuvB(12)-Holliday junction (HJ) complex. HJ DNA is sandwiched between 2 RuvA tetramers; dsDNA enters through RuvA and exits via RuvB. An RuvB hexamer assembles on each DNA strand where it exits the tetramer. Each RuvB hexamer is contacted by two RuvA subunits (via domain III) on 2 adjacent RuvB subunits; this complex drives branch migration. In the full resolvosome a probable DNA-RuvA(4)-RuvB(12)-RuvC(2) complex forms which resolves the HJ.

It localises to the cytoplasm. The enzyme catalyses ATP + H2O = ADP + phosphate + H(+). In terms of biological role, the RuvA-RuvB-RuvC complex processes Holliday junction (HJ) DNA during genetic recombination and DNA repair, while the RuvA-RuvB complex plays an important role in the rescue of blocked DNA replication forks via replication fork reversal (RFR). RuvA specifically binds to HJ cruciform DNA, conferring on it an open structure. The RuvB hexamer acts as an ATP-dependent pump, pulling dsDNA into and through the RuvAB complex. RuvB forms 2 homohexamers on either side of HJ DNA bound by 1 or 2 RuvA tetramers; 4 subunits per hexamer contact DNA at a time. Coordinated motions by a converter formed by DNA-disengaged RuvB subunits stimulates ATP hydrolysis and nucleotide exchange. Immobilization of the converter enables RuvB to convert the ATP-contained energy into a lever motion, pulling 2 nucleotides of DNA out of the RuvA tetramer per ATP hydrolyzed, thus driving DNA branch migration. The RuvB motors rotate together with the DNA substrate, which together with the progressing nucleotide cycle form the mechanistic basis for DNA recombination by continuous HJ branch migration. Branch migration allows RuvC to scan DNA until it finds its consensus sequence, where it cleaves and resolves cruciform DNA. The polypeptide is Holliday junction branch migration complex subunit RuvB (Staphylococcus aureus (strain N315)).